Here is a 47-residue protein sequence, read N- to C-terminus: Large ribosomal subunit protein bL33 (47 aa).

This sequence belongs to the bacterial ribosomal protein bL33 family.

The polypeptide is Large ribosomal subunit protein bL33 (Staphylococcus xylosus).